We begin with the raw amino-acid sequence, 532 residues long: Pentatricopeptide repeat-containing protein At4g02820, mitochondrial (532 aa).

Residues 1–28 (MNKNMLVRSARPTLASIHRLFSAAAAAT) constitute a mitochondrion transit peptide. The tract at residues 35–56 (PVVKPRSGGGKGGESANKKETV) is disordered. 10 PPR repeats span residues 161–195 (GHAA…GFLK), 196–226 (SCLP…LKIR), 230–264 (DIVT…KLNP), 265–295 (DWVT…MEKL), 300–330 (NRVA…VKSS), 335–365 (NDAE…WESV), 370–404 (DARI…GINP), 405–435 (SYST…AIDS), 442–472 (NVRL…LQKA), and 476–512 (NTQL…DEET).

The protein belongs to the PPR family. P subfamily.

The protein resides in the mitochondrion. This chain is Pentatricopeptide repeat-containing protein At4g02820, mitochondrial, found in Arabidopsis thaliana (Mouse-ear cress).